Consider the following 545-residue polypeptide: CTP synthase (545 aa).

The interval Met1–Phe266 is amidoligase domain. Ser13 is a binding site for CTP. A UTP-binding site is contributed by Ser13. Residues Ser14–Ile19 and Asp71 each bind ATP. The Mg(2+) site is built by Asp71 and Glu140. Residues Asp147–Glu149, Lys187–Gln192, and Lys223 contribute to the CTP site. Residues Lys187–Gln192 and Lys223 contribute to the UTP site. Lys239–Ala241 lines the ATP pocket. One can recognise a Glutamine amidotransferase type-1 domain in the interval Arg292–Lys543. Gly353 provides a ligand contact to L-glutamine. The Nucleophile; for glutamine hydrolysis role is filled by Cys380. Residues Leu381–Gln384, Glu404, and Arg471 each bind L-glutamine. Active-site residues include His516 and Glu518.

This sequence belongs to the CTP synthase family. In terms of assembly, homotetramer.

The enzyme catalyses UTP + L-glutamine + ATP + H2O = CTP + L-glutamate + ADP + phosphate + 2 H(+). It carries out the reaction L-glutamine + H2O = L-glutamate + NH4(+). It catalyses the reaction UTP + NH4(+) + ATP = CTP + ADP + phosphate + 2 H(+). The protein operates within pyrimidine metabolism; CTP biosynthesis via de novo pathway; CTP from UDP: step 2/2. With respect to regulation, allosterically activated by GTP, when glutamine is the substrate; GTP has no effect on the reaction when ammonia is the substrate. The allosteric effector GTP functions by stabilizing the protein conformation that binds the tetrahedral intermediate(s) formed during glutamine hydrolysis. Inhibited by the product CTP, via allosteric rather than competitive inhibition. Catalyzes the ATP-dependent amination of UTP to CTP with either L-glutamine or ammonia as the source of nitrogen. Regulates intracellular CTP levels through interactions with the four ribonucleotide triphosphates. In Acinetobacter baumannii (strain ACICU), this protein is CTP synthase.